We begin with the raw amino-acid sequence, 339 residues long: Phenylalanine--tRNA ligase alpha subunit (339 aa).

Mg(2+) is bound at residue Glu-254.

It belongs to the class-II aminoacyl-tRNA synthetase family. Phe-tRNA synthetase alpha subunit type 1 subfamily. In terms of assembly, tetramer of two alpha and two beta subunits. Requires Mg(2+) as cofactor.

It is found in the cytoplasm. The enzyme catalyses tRNA(Phe) + L-phenylalanine + ATP = L-phenylalanyl-tRNA(Phe) + AMP + diphosphate + H(+). The sequence is that of Phenylalanine--tRNA ligase alpha subunit from Desulforudis audaxviator (strain MP104C).